The sequence spans 328 residues: Renalase (328 aa).

FAD is bound by residues alanine 13, 32-33 (DK), arginine 40, and 56-57 (QY). Substrate-binding positions include 57-61 (YFTAR) and 96-98 (SPD). Isoleucine 128 is a binding site for FAD. Substrate is bound at residue threonine 185. FAD is bound at residue aspartate 302. Arginine 308 lines the substrate pocket. Valine 309 contacts FAD.

It belongs to the bacterial renalase family. FAD serves as cofactor.

The catalysed reaction is 1,2-dihydro-beta-NAD + O2 + H(+) = H2O2 + NAD(+). It catalyses the reaction 1,2-dihydro-beta-NADP + O2 + H(+) = H2O2 + NADP(+). The enzyme catalyses 1,6-dihydro-beta-NADP + O2 + H(+) = H2O2 + NADP(+). It carries out the reaction 1,6-dihydro-beta-NAD + O2 + H(+) = H2O2 + NAD(+). In terms of biological role, catalyzes the oxidation of the 1,2-dihydro- and 1,6-dihydro- isomeric forms of beta-NAD(P) back to beta-NAD(P)+. Has a preference for 1,2-dihydro-beta-NAD as substrate. May serve to protect primary metabolism dehydrogenases from inhibition by the 1,2-dihydro- and 1,6-dihydro-beta-NAD(P) isomers. The chain is Renalase from Pseudomonas savastanoi pv. phaseolicola (strain 1448A / Race 6) (Pseudomonas syringae pv. phaseolicola (strain 1448A / Race 6)).